A 61-amino-acid chain; its full sequence is Small ribosomal subunit protein uS14 (61 aa).

The Zn(2+) site is built by Cys-24, Cys-27, Cys-40, and Cys-43.

This sequence belongs to the universal ribosomal protein uS14 family. Zinc-binding uS14 subfamily. In terms of assembly, part of the 30S ribosomal subunit. Contacts proteins S3 and S10. It depends on Zn(2+) as a cofactor.

In terms of biological role, binds 16S rRNA, required for the assembly of 30S particles and may also be responsible for determining the conformation of the 16S rRNA at the A site. This is Small ribosomal subunit protein uS14 from Coprothermobacter proteolyticus (strain ATCC 35245 / DSM 5265 / OCM 4 / BT).